The following is a 20-amino-acid chain: Unknown protein NF028 from 2D-PAGE (20 aa).

This is Unknown protein NF028 from 2D-PAGE from Naegleria fowleri (Brain eating amoeba).